The sequence spans 149 residues: Transcriptional repressor NrdR (149 aa).

A zinc finger lies at 3-34 (CPFCSAVDTKVIDSRLVGEGTQVRRRRQCVIC). The ATP-cone domain maps to 49 to 139 (PRVIKSNDVR…VYRSFEDIRE (91 aa)).

Belongs to the NrdR family. Requires Zn(2+) as cofactor.

Its function is as follows. Negatively regulates transcription of bacterial ribonucleotide reductase nrd genes and operons by binding to NrdR-boxes. The protein is Transcriptional repressor NrdR of Sodalis glossinidius (strain morsitans).